Here is a 137-residue protein sequence, read N- to C-terminus: uncharacterized protein (137 aa).

The first 21 residues, 1–21 (MFNRRVLFLSVFSCAVFMLSG), serve as a signal peptide directing secretion. Cysteine 22 carries the N-palmitoyl cysteine lipid modification. Residue cysteine 22 is the site of S-diacylglycerol cysteine attachment.

The protein localises to the membrane. This is an uncharacterized protein from Escherichia coli (strain K12).